The following is a 277-amino-acid chain: MEMO1 family protein Tpet_0837 (277 aa).

The protein belongs to the MEMO1 family.

In Thermotoga petrophila (strain ATCC BAA-488 / DSM 13995 / JCM 10881 / RKU-1), this protein is MEMO1 family protein Tpet_0837.